Consider the following 322-residue polypeptide: NADH-quinone oxidoreductase subunit H (322 aa).

8 helical membrane-spanning segments follow: residues Ile14–Phe34, Tyr81–Ile101, Val114–Gly134, Ser149–Ala169, Leu186–Leu206, Phe237–Phe257, Phe265–Ile285, and Trp302–Ile322.

This sequence belongs to the complex I subunit 1 family. NDH-1 is composed of 13 different subunits. Subunits NuoA, H, J, K, L, M, N constitute the membrane sector of the complex.

The protein resides in the cell inner membrane. It carries out the reaction a quinone + NADH + 5 H(+)(in) = a quinol + NAD(+) + 4 H(+)(out). In terms of biological role, NDH-1 shuttles electrons from NADH, via FMN and iron-sulfur (Fe-S) centers, to quinones in the respiratory chain. The immediate electron acceptor for the enzyme in this species is believed to be ubiquinone. Couples the redox reaction to proton translocation (for every two electrons transferred, four hydrogen ions are translocated across the cytoplasmic membrane), and thus conserves the redox energy in a proton gradient. This subunit may bind ubiquinone. This chain is NADH-quinone oxidoreductase subunit H, found in Blochmanniella floridana.